A 383-amino-acid polypeptide reads, in one-letter code: Acetylornithine deacetylase (383 aa).

His-80 provides a ligand contact to Zn(2+). Residue Asp-82 is part of the active site. Asp-112 contributes to the Zn(2+) binding site. Glu-144 is an active-site residue. Positions 145, 169, and 355 each coordinate Zn(2+).

This sequence belongs to the peptidase M20A family. ArgE subfamily. Homodimer. Zn(2+) is required as a cofactor. Co(2+) serves as cofactor. Requires glutathione as cofactor.

Its subcellular location is the cytoplasm. The enzyme catalyses N(2)-acetyl-L-ornithine + H2O = L-ornithine + acetate. Its pathway is amino-acid biosynthesis; L-arginine biosynthesis; L-ornithine from N(2)-acetyl-L-ornithine (linear): step 1/1. In terms of biological role, catalyzes the hydrolysis of the amide bond of N(2)-acetylated L-amino acids. Cleaves the acetyl group from N-acetyl-L-ornithine to form L-ornithine, an intermediate in L-arginine biosynthesis pathway, and a branchpoint in the synthesis of polyamines. The protein is Acetylornithine deacetylase of Escherichia coli O17:K52:H18 (strain UMN026 / ExPEC).